The sequence spans 611 residues: MSKIIGIDLGTTNSCVAVMEGGEPKVIPNPEGNRTTPSVVAFKNEERQVGEVAKRQAITNPNTIMSVKRHMGTDYKVEVEGKDYTPQEISAIILQNLKASAEAYLGETVTKAVITVPAYFNDAERQATKDAGRIAGLEVERIINEPTAAALAYGLEKQDEEQKILVYDLGGGTFDVSILELADGTFEVISTAGDNRLGGDDFDQVIIDHLVAEFKKENNIDLSQDKMALQRLKDAAEKAKKDLSGVTQTQISLPFISAGAAGPLHLELTLTRAKFEELSAGLVERTLEPTRRALKDAGFAPSELDKVILVGGSTRIPAVQEAIKRETGKEPYKGVNPDEVVALGAAVQGGVLTGDVEGVLLLDVTPLSLGIETMGGVFTKLIERNTTIPTSKSQVFSTAADNQPAVDIHVLQGERPMSADNKTLGRFQLTDLPPAPRGIPQIEVTFDIDANGIVNVRAKDLGTSKEQAITIQSSSGLSDEEVERMVQEAEANADADQKRKEEVELRNEADQLVFQTDKVVKDLEGKVDAAEVAKATEAKEALQAAIEKNELEEIRAKKDALQEIVQQLTVKLYEQAQAAAGQAEGAEGAQDAGAKKDNVVDAEFEEVKEDK.

At Thr173 the chain carries Phosphothreonine; by autocatalysis. The span at 577–592 (QAAAGQAEGAEGAQDA) shows a compositional bias: low complexity. The disordered stretch occupies residues 577–598 (QAAAGQAEGAEGAQDAGAKKDN).

This sequence belongs to the heat shock protein 70 family.

Acts as a chaperone. The chain is Chaperone protein DnaK from Bacillus anthracis (strain A0248).